The sequence spans 350 residues: tRNA uridine(34) hydroxylase (350 aa).

Residues 146-240 enclose the Rhodanese domain; that stretch reads DDPDALFIDM…YARKAREQGL (95 aa). The active-site Cysteine persulfide intermediate is the cysteine 200.

This sequence belongs to the TrhO family.

The enzyme catalyses uridine(34) in tRNA + AH2 + O2 = 5-hydroxyuridine(34) in tRNA + A + H2O. Catalyzes oxygen-dependent 5-hydroxyuridine (ho5U) modification at position 34 in tRNAs, the first step in 5-carboxymethoxyuridine (cmo5U) biosynthesis. May be part of an alternate pathway, which is able to bypass cmo5U biogenesis in a subset of tRNAs under aerobic conditions. In Escherichia coli O157:H7, this protein is tRNA uridine(34) hydroxylase.